Reading from the N-terminus, the 156-residue chain is MNLNATLFAQMIVFFVLWWVVARFVWPPLVKALDERSSKIADGLAAAERGKEALALASNEAEQELNKARQEGVQRVAEAEKRAQMSAEEIRANAQAEAARVISQAQQDAAQQVTRAREVLRAEVAVLAVKGAEQILRREVDAKAHGQLLDQLKAEL.

A helical transmembrane segment spans residues 7-27 (LFAQMIVFFVLWWVVARFVWP).

It belongs to the ATPase B chain family. As to quaternary structure, F-type ATPases have 2 components, F(1) - the catalytic core - and F(0) - the membrane proton channel. F(1) has five subunits: alpha(3), beta(3), gamma(1), delta(1), epsilon(1). F(0) has three main subunits: a(1), b(2) and c(10-14). The alpha and beta chains form an alternating ring which encloses part of the gamma chain. F(1) is attached to F(0) by a central stalk formed by the gamma and epsilon chains, while a peripheral stalk is formed by the delta and b chains.

The protein resides in the cell inner membrane. Its function is as follows. F(1)F(0) ATP synthase produces ATP from ADP in the presence of a proton or sodium gradient. F-type ATPases consist of two structural domains, F(1) containing the extramembraneous catalytic core and F(0) containing the membrane proton channel, linked together by a central stalk and a peripheral stalk. During catalysis, ATP synthesis in the catalytic domain of F(1) is coupled via a rotary mechanism of the central stalk subunits to proton translocation. Component of the F(0) channel, it forms part of the peripheral stalk, linking F(1) to F(0). The polypeptide is ATP synthase subunit b (Polynucleobacter necessarius subsp. necessarius (strain STIR1)).